The sequence spans 339 residues: Diguanylate cyclase VdcA (339 aa).

Residues 206 to 339 enclose the GGDEF domain; that stretch reads QQVSLIMLDI…NLGRNRVMPL (134 aa). D214 contacts Mg(2+). Substrate contacts are provided by N222 and D231. E257 lines the Mg(2+) pocket. The Proton acceptor role is filled by E257.

Mg(2+) serves as cofactor.

It catalyses the reaction 2 GTP = 3',3'-c-di-GMP + 2 diphosphate. Its pathway is purine metabolism; 3',5'-cyclic di-GMP biosynthesis. Its function is as follows. Diguanylate cyclase (DGC) that catalyzes the synthesis of cyclic diguanylate (c-di-GMP) via the condensation of 2 GTP molecules. Is involved in the modulation of intracellular c-di-GMP levels. Cyclic-di-GMP is a second messenger which positively regulates biofilm formation and negatively regulates virulence in V.cholerae, and is proposed to play an important role in the transition from persistence in the environment to survival in the host. Overexpression of vdcA results in increased biofilm formation, and reduced motility and virulence. In Vibrio cholerae serotype O1 (strain ATCC 39315 / El Tor Inaba N16961), this protein is Diguanylate cyclase VdcA (vdcA).